Consider the following 418-residue polypeptide: UDP-N-acetylglucosamine 1-carboxyvinyltransferase 1 (418 aa).

Position 22 to 23 (22 to 23) interacts with phosphoenolpyruvate; that stretch reads KN. Arg-94 contributes to the UDP-N-acetyl-alpha-D-glucosamine binding site. Cys-118 (proton donor) is an active-site residue. Cys-118 is modified (2-(S-cysteinyl)pyruvic acid O-phosphothioketal). Residues 123 to 127, Asp-306, and Ile-328 contribute to the UDP-N-acetyl-alpha-D-glucosamine site; that span reads RPIDL.

It belongs to the EPSP synthase family. MurA subfamily.

The protein localises to the cytoplasm. The enzyme catalyses phosphoenolpyruvate + UDP-N-acetyl-alpha-D-glucosamine = UDP-N-acetyl-3-O-(1-carboxyvinyl)-alpha-D-glucosamine + phosphate. It participates in cell wall biogenesis; peptidoglycan biosynthesis. Its function is as follows. Cell wall formation. Adds enolpyruvyl to UDP-N-acetylglucosamine. The polypeptide is UDP-N-acetylglucosamine 1-carboxyvinyltransferase 1 (Clostridium acetobutylicum (strain ATCC 824 / DSM 792 / JCM 1419 / IAM 19013 / LMG 5710 / NBRC 13948 / NRRL B-527 / VKM B-1787 / 2291 / W)).